The chain runs to 29 residues: Cytochrome b6-f complex subunit 8 (29 aa).

The helical transmembrane segment at 3–23 (ILTLGWVSVLTLFTYSIAMVV) threads the bilayer.

This sequence belongs to the PetN family. The 4 large subunits of the cytochrome b6-f complex are cytochrome b6, subunit IV (17 kDa polypeptide, PetD), cytochrome f and the Rieske protein, while the 4 small subunits are PetG, PetL, PetM and PetN. The complex functions as a dimer.

The protein resides in the cellular thylakoid membrane. Component of the cytochrome b6-f complex, which mediates electron transfer between photosystem II (PSII) and photosystem I (PSI), cyclic electron flow around PSI, and state transitions. The chain is Cytochrome b6-f complex subunit 8 from Acaryochloris marina (strain MBIC 11017).